The sequence spans 67 residues: Sporulation protein 24 (67 aa).

A phosphoserine mark is found at Ser-24 and Ser-32.

Post-translationally, phosphorylated during meiosis. During meiosis, exists in both unphosphorylated and phosphorylated forms with the highest degree of phosphorylation occurring in mid-meiosis.

The protein resides in the prospore membrane. Its function is as follows. Required for efficient sporulation. This Saccharomyces cerevisiae (strain ATCC 204508 / S288c) (Baker's yeast) protein is Sporulation protein 24.